The following is a 232-amino-acid chain: Vesicle transport through interaction with t-SNAREs homolog 1B (232 aa).

At A2 the chain carries N-acetylalanine. Interaction with CLINT1 stretches follow at residues 2–23 and 69–73; these read ASSA…GLHE and APLSF. The Cytoplasmic segment spans residues 2–208; that stretch reads ASSAASSEHF…SRKVTTNKLL (207 aa). Residues 35–98 are a coiled coil; that stretch reads TAGTEEKKKL…AKLHREVRST (64 aa). The residue at position 103 (T103) is a Phosphothreonine. R107 carries the post-translational modification Omega-N-methylarginine. S138 carries the phosphoserine modification. Residues 161–198 adopt a coiled-coil conformation; the sequence is SEIIEELGEQRDQLERTKSRLVNTSENLSKSRKILRSM. The helical; Anchor for type IV membrane protein transmembrane segment at 209–229 threads the bilayer; the sequence is LSIIILLELAILGGLVYYKFF. The Vesicular portion of the chain corresponds to 230–232; the sequence is RSH.

This sequence belongs to the VTI1 family. In terms of assembly, forms a SNARE complex with STX7, STX8 and VAMP8 which functions in the homotypic fusion of late endosomes. Component of the SNARE complex composed of STX7, STX8, VAMP7 and VIT1B that is required for heterotypic fusion of late endosomes with lysosomes. May interact with STX17. Interacts with CLINT1. Expressed in all tissues examined.

The protein resides in the early endosome membrane. Its subcellular location is the late endosome membrane. It is found in the lysosome membrane. It localises to the cytoplasmic granule. The protein localises to the recycling endosome membrane. V-SNARE that mediates vesicle transport pathways through interactions with t-SNAREs on the target membrane. These interactions are proposed to mediate aspects of the specificity of vesicle trafficking and to promote fusion of the lipid bilayers. May be concerned with increased secretion of cytokines associated with cellular senescence. The polypeptide is Vesicle transport through interaction with t-SNAREs homolog 1B (VTI1B) (Homo sapiens (Human)).